The primary structure comprises 338 residues: 4-hydroxy-3-methylbut-2-enyl diphosphate reductase (338 aa).

Cys21 is a binding site for [4Fe-4S] cluster. (2E)-4-hydroxy-3-methylbut-2-enyl diphosphate-binding residues include His50 and His83. 2 residues coordinate dimethylallyl diphosphate: His50 and His83. His50 and His83 together coordinate isopentenyl diphosphate. Cys105 is a [4Fe-4S] cluster binding site. His133 serves as a coordination point for (2E)-4-hydroxy-3-methylbut-2-enyl diphosphate. A dimethylallyl diphosphate-binding site is contributed by His133. Residue His133 participates in isopentenyl diphosphate binding. The Proton donor role is filled by Glu135. Residue Thr173 coordinates (2E)-4-hydroxy-3-methylbut-2-enyl diphosphate. Cys203 is a binding site for [4Fe-4S] cluster. Positions 231, 232, 233, and 276 each coordinate (2E)-4-hydroxy-3-methylbut-2-enyl diphosphate. 4 residues coordinate dimethylallyl diphosphate: Ser231, Ser232, Asn233, and Ser276. Residues Ser231, Ser232, Asn233, and Ser276 each contribute to the isopentenyl diphosphate site.

It belongs to the IspH family. [4Fe-4S] cluster serves as cofactor.

The catalysed reaction is isopentenyl diphosphate + 2 oxidized [2Fe-2S]-[ferredoxin] + H2O = (2E)-4-hydroxy-3-methylbut-2-enyl diphosphate + 2 reduced [2Fe-2S]-[ferredoxin] + 2 H(+). It carries out the reaction dimethylallyl diphosphate + 2 oxidized [2Fe-2S]-[ferredoxin] + H2O = (2E)-4-hydroxy-3-methylbut-2-enyl diphosphate + 2 reduced [2Fe-2S]-[ferredoxin] + 2 H(+). It functions in the pathway isoprenoid biosynthesis; dimethylallyl diphosphate biosynthesis; dimethylallyl diphosphate from (2E)-4-hydroxy-3-methylbutenyl diphosphate: step 1/1. It participates in isoprenoid biosynthesis; isopentenyl diphosphate biosynthesis via DXP pathway; isopentenyl diphosphate from 1-deoxy-D-xylulose 5-phosphate: step 6/6. Functionally, catalyzes the conversion of 1-hydroxy-2-methyl-2-(E)-butenyl 4-diphosphate (HMBPP) into a mixture of isopentenyl diphosphate (IPP) and dimethylallyl diphosphate (DMAPP). Acts in the terminal step of the DOXP/MEP pathway for isoprenoid precursor biosynthesis. The chain is 4-hydroxy-3-methylbut-2-enyl diphosphate reductase from Streptomyces coelicolor (strain ATCC BAA-471 / A3(2) / M145).